Here is a 105-residue protein sequence, read N- to C-terminus: Urease subunit beta (105 aa).

Belongs to the urease beta subunit family. As to quaternary structure, heterotrimer of UreA (gamma), UreB (beta) and UreC (alpha) subunits. Three heterotrimers associate to form the active enzyme.

Its subcellular location is the cytoplasm. It carries out the reaction urea + 2 H2O + H(+) = hydrogencarbonate + 2 NH4(+). Its pathway is nitrogen metabolism; urea degradation; CO(2) and NH(3) from urea (urease route): step 1/1. This is Urease subunit beta from Shewanella halifaxensis (strain HAW-EB4).